A 195-amino-acid chain; its full sequence is ATP-dependent Clp protease proteolytic subunit (195 aa).

S96 acts as the Nucleophile in catalysis. H121 is a catalytic residue.

It belongs to the peptidase S14 family. As to quaternary structure, fourteen ClpP subunits assemble into 2 heptameric rings which stack back to back to give a disk-like structure with a central cavity, resembling the structure of eukaryotic proteasomes.

Its subcellular location is the cytoplasm. It catalyses the reaction Hydrolysis of proteins to small peptides in the presence of ATP and magnesium. alpha-casein is the usual test substrate. In the absence of ATP, only oligopeptides shorter than five residues are hydrolyzed (such as succinyl-Leu-Tyr-|-NHMec, and Leu-Tyr-Leu-|-Tyr-Trp, in which cleavage of the -Tyr-|-Leu- and -Tyr-|-Trp bonds also occurs).. Its function is as follows. Cleaves peptides in various proteins in a process that requires ATP hydrolysis. Has a chymotrypsin-like activity. Plays a major role in the degradation of misfolded proteins. The chain is ATP-dependent Clp protease proteolytic subunit from Elusimicrobium minutum (strain Pei191).